The following is a 182-amino-acid chain: Alpha-S2-casein (182 aa).

The signal sequence occupies residues 1–15 (MKFFIFTCLLAVALA). 3 positions are modified to phosphoserine: serine 22, serine 23, and serine 24.

This sequence belongs to the alpha-casein family. Mammary gland specific. Secreted in milk.

Its subcellular location is the secreted. Important role in the capacity of milk to transport calcium phosphate. The polypeptide is Alpha-S2-casein (CSN1S2) (Oryctolagus cuniculus (Rabbit)).